The chain runs to 266 residues: Apolipoprotein A-I (266 aa).

The N-terminal stretch at 1-18 is a signal peptide; sequence MKAVVLTLAVLFLTGSQA. 2 repeat units span residues 67 to 88 and 89 to 110. Positions 67-266 are 10 X approximate tandem repeats; the sequence is LKLLDNWDSL…DEATKKLNSQ (200 aa). Methionine sulfoxide is present on Met109. Residues 111-121 form a 3; half-length repeat; it reads KDLEEVKKKVQ. Repeat copies occupy residues 122–143, 144–165, 166–187, 188–209, and 210–231. One copy of the 9; half-length repeat lies at 232–242; sequence PALEDLRQGLL. Repeat unit 10 spans residues 243–266; the sequence is PVLENFRVSLLAAVDEATKKLNSQ.

It belongs to the apolipoprotein A1/A4/E family. In terms of assembly, homodimer. Interacts with APOA1BP and CLU. Component of a sperm activating protein complex (SPAP), consisting of APOA1, an immunoglobulin heavy chain, an immunoglobulin light chain and albumin. Interacts with NDRG1. Interacts with SCGB3A2. Interacts with NAXE and YJEFN3. In terms of processing, glycosylated. Post-translationally, palmitoylated. Phosphorylation sites are present in the extracellular medium.

It is found in the secreted. Participates in the reverse transport of cholesterol from tissues to the liver for excretion by promoting cholesterol efflux from tissues and by acting as a cofactor for the lecithin cholesterol acyltransferase (LCAT). As part of the SPAP complex, activates spermatozoa motility. In Leptonychotes weddellii (Weddell seal), this protein is Apolipoprotein A-I (APOA1).